A 333-amino-acid chain; its full sequence is uncharacterized protein (333 aa).

It to E.coli YfeH.

This is an uncharacterized protein from Pseudomonas aeruginosa (strain ATCC 15692 / DSM 22644 / CIP 104116 / JCM 14847 / LMG 12228 / 1C / PRS 101 / PAO1).